The chain runs to 249 residues: Protein TIFY 10B (249 aa).

The region spanning 113–148 (PESQSAPLTIFYGGRVMVFDDFSAEKAKEVIDLANK) is the Tify domain. Residues 204-229 (PIARRASLHRFLEKRKDRITSKAPYQ) carry the Jas motif. Positions 206-213 (ARRASLHR) match the Nuclear localization signal motif. Residues 225 to 249 (KAPYQIDGSAEASSKPTNPAWLSSR) are disordered. A compositionally biased stretch (polar residues) spans 235-249 (EASSKPTNPAWLSSR).

This sequence belongs to the TIFY/JAZ family. In terms of assembly, homo- and heterodimer. Interacts with COI1, MYC2, MYC3, MYC4, AFPH2/NINJA, TIFY10A/JAZ1, TIFY6B/JAZ3, TIFY11A/JAZ5, TIFY11B/JAZ6, TIFY5A/JAZ8, TIFY7/JAZ9, TIFY9/JAZ10, TIFY3A/JAZ11 and TIFY3B/JAZ12. Interacts with RHD6 and RSL1. As to quaternary structure, (Microbial infection) Interacts with the pathogenic Pseudomonas syringae HopZ1a protein. (Microbial infection) Acetylated by Pseudomonas syringae HopZ1a. In terms of processing, ubiquitinated. Targeted for degradation by the SCF(COI1) E3 ubiquitin ligase-proteasome pathway during jasmonate signaling. In terms of tissue distribution, expressed in cotyledons, hypocotyls, roots, sepals, petal vascular tissue and stigmas of developing flowers. Expressed in stamen filaments after jasmonic acid treatment.

The protein resides in the nucleus. Functionally, repressor of jasmonate responses. Jasmonoyl-isoleucine (JA-Ile) specifically promotes COI1-TIFY10B/JAZ2 interaction. Activated by MYC2, MYC3 and MYC4 transcription factors. Interacts with and suppresses RHD6 and RSL1 transcription factor activities to negatively regulate jasmonate-stimulated root hair development. This chain is Protein TIFY 10B, found in Arabidopsis thaliana (Mouse-ear cress).